The following is a 909-amino-acid chain: DNA mismatch repair protein MutS (909 aa).

Basic and acidic residues predominate over residues 275 to 290; the sequence is QKAERPPLSRPEREEQ. The interval 275–295 is disordered; the sequence is QKAERPPLSRPEREEQGSTLF. 661–668 is an ATP binding site; the sequence is GPNMGGKS.

This sequence belongs to the DNA mismatch repair MutS family.

Its function is as follows. This protein is involved in the repair of mismatches in DNA. It is possible that it carries out the mismatch recognition step. This protein has a weak ATPase activity. This is DNA mismatch repair protein MutS from Mesorhizobium japonicum (strain LMG 29417 / CECT 9101 / MAFF 303099) (Mesorhizobium loti (strain MAFF 303099)).